Here is a 152-residue protein sequence, read N- to C-terminus: Ribosome maturation factor RimP (152 aa).

It belongs to the RimP family.

Its subcellular location is the cytoplasm. Functionally, required for maturation of 30S ribosomal subunits. The sequence is that of Ribosome maturation factor RimP from Burkholderia vietnamiensis (strain G4 / LMG 22486) (Burkholderia cepacia (strain R1808)).